A 245-amino-acid chain; its full sequence is Ribosomal RNA large subunit methyltransferase E (245 aa).

The tract at residues 1–25 (MTKSPIGGNRSGRKLGQKVKKGKLK) is disordered. Positions 11-25 (SGRKLGQKVKKGKLK) are enriched in basic residues. Positions 81, 83, 104, 120, and 144 each coordinate S-adenosyl-L-methionine. K184 (proton acceptor) is an active-site residue.

The protein belongs to the class I-like SAM-binding methyltransferase superfamily. RNA methyltransferase RlmE family.

The protein resides in the cytoplasm. The catalysed reaction is uridine(2552) in 23S rRNA + S-adenosyl-L-methionine = 2'-O-methyluridine(2552) in 23S rRNA + S-adenosyl-L-homocysteine + H(+). Specifically methylates the uridine in position 2552 of 23S rRNA at the 2'-O position of the ribose in the fully assembled 50S ribosomal subunit. This is Ribosomal RNA large subunit methyltransferase E from Rhizobium meliloti (strain 1021) (Ensifer meliloti).